The chain runs to 292 residues: Homoserine kinase (292 aa).

84 to 94 (PLSRGLGSSSA) provides a ligand contact to ATP.

The protein belongs to the GHMP kinase family. Homoserine kinase subfamily.

Its subcellular location is the cytoplasm. It catalyses the reaction L-homoserine + ATP = O-phospho-L-homoserine + ADP + H(+). The protein operates within amino-acid biosynthesis; L-threonine biosynthesis; L-threonine from L-aspartate: step 4/5. Catalyzes the ATP-dependent phosphorylation of L-homoserine to L-homoserine phosphate. The sequence is that of Homoserine kinase from Campylobacter jejuni subsp. jejuni serotype O:6 (strain 81116 / NCTC 11828).